A 397-amino-acid chain; its full sequence is Geranylgeranyl pyrophosphate synthase AN1592 (397 aa).

A disordered region spans residues 1-67 (MSPPLDSALE…SHDSSASSNI (67 aa)). Residues 13–42 (SEYKETAFPRTEKDPSQYKEHDLVTPEKEI) show a composition bias toward basic and acidic residues. The span at 52 to 67 (SHSSHGSHDSSASSNI) shows a compositional bias: low complexity. Residues Lys120, Arg123, and His152 each coordinate isopentenyl diphosphate. Mg(2+) contacts are provided by Asp159 and Asp163. Residue Arg168 participates in dimethylallyl diphosphate binding. Arg169 is a binding site for isopentenyl diphosphate. Dimethylallyl diphosphate is bound by residues Lys247, Thr248, and Gln281. A Mg(2+)-binding site is contributed by Asp284. Positions 288, 298, and 308 each coordinate dimethylallyl diphosphate.

The protein belongs to the FPP/GGPP synthase family. The cofactor is Mg(2+).

It carries out the reaction isopentenyl diphosphate + dimethylallyl diphosphate = (2E)-geranyl diphosphate + diphosphate. It catalyses the reaction isopentenyl diphosphate + (2E)-geranyl diphosphate = (2E,6E)-farnesyl diphosphate + diphosphate. The enzyme catalyses isopentenyl diphosphate + (2E,6E)-farnesyl diphosphate = (2E,6E,10E)-geranylgeranyl diphosphate + diphosphate. The protein operates within secondary metabolite biosynthesis; terpenoid biosynthesis. Functionally, geranylgeranyl pyrophosphate synthase; part of the gene cluster that mediates the biosynthesis of the diterpene ent-pimara-8(14),15-diene (PD). Within the cluster, the HMG-CoA reductase AN1593 functions in the mevalonate pathway, which produces isoprenoid precursors. The geranylgeranyl pyrophosphate (GGPP) synthase AN1592 is needed in the formation of GGPP, the precursor for diterpenes. Lastly, the pimaradiene synthase pbcA performs the 2 cyclization steps that convert GGPP to ent-pimara-8(14),15-diene. The putative roles of the remaining cluster enzymes in ent-pimara-8(14),15-diene biosynthesis is unclear. The cytochrome P450 monooxygenase AN1598, the glutathione S-transferase AN1595, the oxidoreductases AN1596 and AN1597 probably function as decorative enzymes. It is possible that in biological conditions the compound is oxidized to ent-pimara-8(14),15-dien-19-oic acid, which is a bioactive diterpene compound predominant in many plant extracts. The chain is Geranylgeranyl pyrophosphate synthase AN1592 from Emericella nidulans (strain FGSC A4 / ATCC 38163 / CBS 112.46 / NRRL 194 / M139) (Aspergillus nidulans).